The chain runs to 188 residues: PRA1 family protein F4 (188 aa).

Residues 1 to 13 (MANNDEITTSSHA) are compositionally biased toward polar residues. Residues 1 to 25 (MANNDEITTSSHASPAVNHESISRA) form a disordered region. 4 helical membrane-spanning segments follow: residues 67–86 (YFRS…SLIW), 90–107 (SLIV…LYFL), 119–139 (IDDR…LLLT), and 142–162 (TFNI…HAVI).

It belongs to the PRA1 family.

Its subcellular location is the endosome membrane. In terms of biological role, may be involved in both secretory and endocytic intracellular trafficking in the endosomal/prevacuolar compartments. The protein is PRA1 family protein F4 (PRA1F4) of Arabidopsis thaliana (Mouse-ear cress).